Consider the following 172-residue polypeptide: EPIDERMAL PATTERNING FACTOR-like protein 7 (172 aa).

The first 27 residues, 1–27, serve as a signal peptide directing secretion; it reads MDHVNPTLFHLKSLSIFTLTLLYISSP. 4 disulfide bridges follow: Cys-128–Cys-159, Cys-132–Cys-138, Cys-135–Cys-161, and Cys-147–Cys-153.

Belongs to the plant cysteine rich small secretory peptide family. Epidermal patterning factor subfamily.

The protein resides in the secreted. Functionally, controls stomatal patterning. This is EPIDERMAL PATTERNING FACTOR-like protein 7 from Arabidopsis thaliana (Mouse-ear cress).